The primary structure comprises 1224 residues: Potassium channel subfamily T member 1 (1224 aa).

The segment at 1-37 (MARAKLPRSPSEGKAGPGDTPAGAAAPEEPHGLSPLL) is disordered. Topologically, residues 1–79 (MARAKLPRSP…LFFIKNQRSS (79 aa)) are cytoplasmic. Over residues 13–27 (GKAGPGDTPAGAAAP) the composition is skewed to low complexity. Residues 80 to 112 (LRIRLFNFSLKLLTCLLYIVRVLLDNPDQGIGC) traverse the membrane as a helical segment. At 113 to 139 (WGCTKYNYTFNGSSSEFHWAPILWVER) the chain is on the extracellular side. 2 N-linked (GlcNAc...) asparagine glycosylation sites follow: asparagine 119 and asparagine 123. A helical transmembrane segment spans residues 140-164 (KMALWVIQVIVATISFLETMLIIYL). The Cytoplasmic portion of the chain corresponds to 165–178 (SYKGNIWEQIFHVS). The helical transmembrane segment at 179–194 (FVLEMINTLPFIITVF) threads the bilayer. Topologically, residues 195-201 (WPPLRNL) are extracellular. A helical transmembrane segment spans residues 202 to 219 (FIPVFLNCWLAKHALENM). Topologically, residues 220–232 (INDFHRAILRTQS) are cytoplasmic. Residues 233–260 (AMFNQVLILFCTLLCLVFTGTCGIQHLE) form a helical membrane-spanning segment. The Extracellular segment spans residues 261-267 (RAGGNLN). The segment at residues 268 to 288 (LLTSFYFCIVTFSTVGFGDVT) is an intramembrane region (pore-forming). The K(+) site is built by valine 282 and glycine 283. At 289–290 (PK) the chain is on the extracellular side. The helical transmembrane segment at 291 to 324 (IWPSQLLVVILICVTLVVLPLQFEELVYLWMERQ) threads the bilayer. At 325-1224 (KSGGNYSRHR…NPETRDETQL (900 aa)) the chain is on the cytoplasmic side. Residues 338–474 (EKHVVLCVSS…FHVKFADHVV (137 aa)) form the RCK N-terminal 1 domain. Positions 499, 502, 524, and 526 each coordinate Na(+). A disordered region spans residues 644 to 675 (QNTDCRPSQGGSGGDGTKLTLPTENGSGSRRP). Over residues 663-673 (TLPTENGSGSR) the composition is skewed to polar residues. 2 residues coordinate Zn(2+): cysteine 744 and cysteine 745. Residues arginine 747 and lysine 750 each contribute to the K(+) site. Na(+)-binding residues include arginine 747 and lysine 750. Zn(2+)-binding residues include cysteine 752 and histidine 754. K(+) contacts are provided by asparagine 755, tyrosine 757, tyrosine 763, and glycine 764. Residue tyrosine 757 coordinates Na(+). Phenylalanine 765 lines the Na(+) pocket. One can recognise an RCK N-terminal 2 domain in the interval 767–907 (NKLIIVSAET…QFRAKDSYSL (141 aa)). K(+)-binding residues include serine 773, leucine 804, aspartate 806, glycine 828, and aspartate 851. Disordered stretches follow at residues 1038 to 1066 (REAK…ADPV) and 1198 to 1224 (SSSQ…ETQL). 2 stretches are compositionally biased toward low complexity: residues 1045–1055 (GTRAASGSGST) and 1198–1215 (SSSQ…SSCN).

This sequence belongs to the potassium channel family. Calcium-activated (TC 1.A.1.3) subfamily. KCa4.1/KCNT1 sub-subfamily. In terms of assembly, homotetramer; which constitutes the Na(+)-activated K(+) channel. Interacts with KCNT2; these heterodimer channels differ from the homomers in their unitary conductance, kinetic behavior, subcellular localization, and response to activation of protein kinase C. Interacts (via C-terminus) with FMR1; this interaction alters gating properties of KCNT1. Interacts with CRBN via its cytoplasmic C-terminus. Post-translationally, phosphorylated by protein kinase C. Phosphorylation of the C-terminal domain increases channel activity. Enriched in the brainstem and olfactory bulb and detected at significant levels in four different brain regions.

Its subcellular location is the cell membrane. It catalyses the reaction K(+)(in) = K(+)(out). Activated by high intracellular Na(+). In addition to activation by Na(+), is cooperatively activated by intracellular Cl(-) levels. Inhibited by Zn(2+). Activated upon stimulation of G-protein coupled receptors, such as CHRM1 and GRIA1. In terms of biological role, sodium-activated K(+) channel. Acts as an important mediator of neuronal membrane excitability. Contributes to the delayed outward currents. Regulates neuronal bursting in sensory neurons. Contributes to synaptic development and plasticity. The sequence is that of Potassium channel subfamily T member 1 (Kcnt1) from Mus musculus (Mouse).